Here is a 71-residue protein sequence, read N- to C-terminus: Small ribosomal subunit protein bS21 (71 aa).

This sequence belongs to the bacterial ribosomal protein bS21 family.

This Cellvibrio japonicus (strain Ueda107) (Pseudomonas fluorescens subsp. cellulosa) protein is Small ribosomal subunit protein bS21.